A 451-amino-acid polypeptide reads, in one-letter code: MELPLLALLSLGLVCQGGQGLVPPNELKQLSAAGSKYIDAEVENAINGVKQMKTLMDKTSKEHQAMLHTLEETKKKKEEAVKLALEKEKQLAEKQEVCNETMLSLWEECKPCLKHTCMRVYSKMCHSGSGLVGRQLEEFLNRSSPFSIWVNGERIDDLLDREQRQERRFEDLEERFGLMEDGVEDIFQDSTQLYGPAFPFFRTPPFGGFREAFVPPVQRVHLVPRRRLSRELHPFFQHPMHGFHRLFQPLFEMTQHMLDGGHGAWEHPLGGFATESRNFSTDRMVCREIRRNSAGCLRMRDECEKCREILAVDCSQTDPVQSQLREQFEDALRLAERFTRRYDDLLSAFQAEMLNTSSLLDQLNRQFGWVSRLGNLTQGNDGFLQVTTVFSKTPNLEDPSAPADTQVTVQLFDSEPLSLTVPGDISWDDPRFMEIVAEQALQHYKQNNTIE.

A signal peptide spans 1–18 (MELPLLALLSLGLVCQGG). 5 disulfide bridges follow: Cys-98–Cys-314, Cys-109–Cys-306, Cys-112–Cys-303, Cys-117–Cys-296, and Cys-125–Cys-286. 6 N-linked (GlcNAc...) asparagine glycosylation sites follow: Asn-99, Asn-141, Asn-278, Asn-355, Asn-375, and Asn-447.

It belongs to the clusterin family. In terms of assembly, antiparallel disulfide-linked heterodimer of an alpha chain and a beta chain. Self-associates and forms higher oligomers. Interacts with a broad range of misfolded proteins. Proteolytically cleaved on its way through the secretory system, probably within the Golgi lumen. In terms of processing, polyubiquitinated, leading to proteasomal degradation.

The protein localises to the secreted. Its subcellular location is the cytoplasmic vesicle. It localises to the secretory vesicle. It is found in the chromaffin granule. The protein resides in the nucleus. The protein localises to the cytoplasm. Its subcellular location is the mitochondrion membrane. It localises to the cytosol. It is found in the endoplasmic reticulum. Functions as extracellular chaperone that prevents aggregation of nonnative proteins. Prevents stress-induced aggregation of blood plasma proteins. Does not require ATP. Maintains partially unfolded proteins in a state appropriate for subsequent refolding by other chaperones, such as HSPA8/HSC70. Does not refold proteins by itself. Binding to cell surface receptors triggers internalization of the chaperone-client complex and subsequent lysosomal or proteasomal degradation. When secreted, protects cells against apoptosis and against cytolysis by complement: inhibits assembly of the complement membrane attack complex (MAC) by preventing polymerization of C9 pore component of the MAC complex. Intracellular forms interact with ubiquitin and SCF (SKP1-CUL1-F-box protein) E3 ubiquitin-protein ligase complexes and promote the ubiquitination and subsequent proteasomal degradation of target proteins. Modulates NF-kappa-B transcriptional activity. Promotes apoptosis when in the nucleus. Inhibits apoptosis when associated with the mitochondrial membrane by interference with BAX-dependent release of cytochrome c into the cytoplasm. Plays a role in the regulation of cell proliferation. This chain is Clusterin (CLU), found in Coturnix japonica (Japanese quail).